Here is a 351-residue protein sequence, read N- to C-terminus: Photosystem II D2 protein (351 aa).

Residues 39-59 (TAYLAAGGWMTGTTFVTSWYT) form a helical membrane-spanning segment. His116 serves as a coordination point for chlorophyll a. The chain crosses the membrane as a helical span at residues 123–139 (GFCLRQFEIARLVGIRP). Pheophytin a contacts are provided by Gln128 and Asn141. The chain crosses the membrane as a helical span at residues 151–164 (VFVSVFLLYPLGQA). Residue His196 participates in chlorophyll a binding. A helical membrane pass occupies residues 206–226 (GALLCAIHGATVENTLFEDGD). His213 and Phe260 together coordinate a plastoquinone. Residue His213 participates in Fe cation binding. His267 provides a ligand contact to Fe cation. A helical membrane pass occupies residues 277-293 (GLWTSAIGIVGLALNLR).

This sequence belongs to the reaction center PufL/M/PsbA/D family. In terms of assembly, PSII is composed of 1 copy each of membrane proteins PsbA, PsbB, PsbC, PsbD, PsbE, PsbF, PsbH, PsbI, PsbJ, PsbK, PsbL, PsbM, PsbT, PsbX, PsbY, PsbZ, Psb30/Ycf12, at least 3 peripheral proteins of the oxygen-evolving complex and a large number of cofactors. It forms dimeric complexes. The D1/D2 heterodimer binds P680, chlorophylls that are the primary electron donor of PSII, and subsequent electron acceptors. It shares a non-heme iron and each subunit binds pheophytin, quinone, additional chlorophylls, carotenoids and lipids. There is also a Cl(-1) ion associated with D1 and D2, which is required for oxygen evolution. The PSII complex binds additional chlorophylls, carotenoids and specific lipids. serves as cofactor.

Its subcellular location is the plastid. The protein localises to the chloroplast thylakoid membrane. The catalysed reaction is 2 a plastoquinone + 4 hnu + 2 H2O = 2 a plastoquinol + O2. In terms of biological role, photosystem II (PSII) is a light-driven water:plastoquinone oxidoreductase that uses light energy to abstract electrons from H(2)O, generating O(2) and a proton gradient subsequently used for ATP formation. It consists of a core antenna complex that captures photons, and an electron transfer chain that converts photonic excitation into a charge separation. The D1/D2 (PsbA/PsbD) reaction center heterodimer binds P680, the primary electron donor of PSII as well as several subsequent electron acceptors. D2 is needed for assembly of a stable PSII complex. This is Photosystem II D2 protein from Trieres chinensis (Marine centric diatom).